A 767-amino-acid polypeptide reads, in one-letter code: Phosphoribosylformylglycinamidine synthase subunit PurL (767 aa).

His46 is a catalytic residue. Residues Tyr49 and Lys88 each coordinate ATP. Glu90 serves as a coordination point for Mg(2+). Substrate contacts are provided by residues 91-94 and Arg113; that span reads SHNH. His92 acts as the Proton acceptor in catalysis. Residue Asp114 coordinates Mg(2+). Substrate is bound at residue Gln237. Residue Asp265 coordinates Mg(2+). Residue 309–311 coordinates substrate; that stretch reads ESQ. Asp498 and Gly535 together coordinate ATP. A Mg(2+)-binding site is contributed by Asn536. Ser538 contacts substrate.

The protein belongs to the FGAMS family. Monomer. Part of the FGAM synthase complex composed of 1 PurL, 1 PurQ and 2 PurS subunits.

It localises to the cytoplasm. The catalysed reaction is N(2)-formyl-N(1)-(5-phospho-beta-D-ribosyl)glycinamide + L-glutamine + ATP + H2O = 2-formamido-N(1)-(5-O-phospho-beta-D-ribosyl)acetamidine + L-glutamate + ADP + phosphate + H(+). The protein operates within purine metabolism; IMP biosynthesis via de novo pathway; 5-amino-1-(5-phospho-D-ribosyl)imidazole from N(2)-formyl-N(1)-(5-phospho-D-ribosyl)glycinamide: step 1/2. In terms of biological role, part of the phosphoribosylformylglycinamidine synthase complex involved in the purines biosynthetic pathway. Catalyzes the ATP-dependent conversion of formylglycinamide ribonucleotide (FGAR) and glutamine to yield formylglycinamidine ribonucleotide (FGAM) and glutamate. The FGAM synthase complex is composed of three subunits. PurQ produces an ammonia molecule by converting glutamine to glutamate. PurL transfers the ammonia molecule to FGAR to form FGAM in an ATP-dependent manner. PurS interacts with PurQ and PurL and is thought to assist in the transfer of the ammonia molecule from PurQ to PurL. This is Phosphoribosylformylglycinamidine synthase subunit PurL from Anaeromyxobacter sp. (strain Fw109-5).